A 119-amino-acid polypeptide reads, in one-letter code: Ribonuclease P protein component (119 aa).

The protein belongs to the RnpA family. Consists of a catalytic RNA component (M1 or rnpB) and a protein subunit.

The catalysed reaction is Endonucleolytic cleavage of RNA, removing 5'-extranucleotides from tRNA precursor.. In terms of biological role, RNaseP catalyzes the removal of the 5'-leader sequence from pre-tRNA to produce the mature 5'-terminus. It can also cleave other RNA substrates such as 4.5S RNA. The protein component plays an auxiliary but essential role in vivo by binding to the 5'-leader sequence and broadening the substrate specificity of the ribozyme. In Streptococcus equi subsp. equi (strain 4047), this protein is Ribonuclease P protein component.